A 161-amino-acid polypeptide reads, in one-letter code: Nucleotide-binding protein H16_A3060 (161 aa).

The protein belongs to the YajQ family.

Functionally, nucleotide-binding protein. The protein is Nucleotide-binding protein H16_A3060 of Cupriavidus necator (strain ATCC 17699 / DSM 428 / KCTC 22496 / NCIMB 10442 / H16 / Stanier 337) (Ralstonia eutropha).